A 331-amino-acid polypeptide reads, in one-letter code: Isopenicillin N synthase (331 aa).

Isopenicillin N is bound by residues arginine 87, tyrosine 91, serine 183, and tyrosine 189. Residues arginine 87, tyrosine 91, serine 183, tyrosine 189, histidine 214, and aspartate 216 each contribute to the N-[(5S)-5-amino-5-carboxypentanoyl]-L-cysteinyl-D-valine site. Positions 176 to 288 (KPDDTLASVV…RQSLPFFVNL (113 aa)) constitute a Fe2OG dioxygenase domain. Residues histidine 214, aspartate 216, and histidine 270 each coordinate Fe(2+). Arginine 279 lines the 2-oxoglutarate pocket. Serine 281 is an isopenicillin N binding site. An N-[(5S)-5-amino-5-carboxypentanoyl]-L-cysteinyl-D-valine-binding site is contributed by serine 281.

This sequence belongs to the iron/ascorbate-dependent oxidoreductase family. Monomer. Requires Fe(2+) as cofactor.

Its subcellular location is the cytoplasm. It is found in the cytosol. The catalysed reaction is N-[(5S)-5-amino-5-carboxypentanoyl]-L-cysteinyl-D-valine + O2 = isopenicillin N + 2 H2O. It functions in the pathway antibiotic biosynthesis; penicillin G biosynthesis; penicillin G from L-alpha-aminoadipate and L-cysteine and L-valine: step 2/3. Functionally, isopenicillin N synthase; part of the gene cluster that mediates the biosynthesis of penicillin, the world's most important antibiotic. IpnA catalyzes the cyclization of the tripeptide N-[(5S)-5-amino-5-carboxypentanoyl]-L-cysteinyl-D-valine (LLD-ACV or ACV) to form isopenicillin N (IPN) that contains the beta-lactam nucleus. The penicillin biosynthesis occurs via 3 enzymatic steps, the first corresponding to the production of the tripeptide N-[(5S)-5-amino-5-carboxypentanoyl]-L-cysteinyl-D-valine (LLD-ACV or ACV) by the NRPS acvA. The tripeptide ACV is then cyclized to isopenicillin N (IPN) by the isopenicillin N synthase ipnA that forms the beta-lactam nucleus. Finally, the alpha-aminoadipyl side chain is exchanged for phenylacetic acid by the isopenicillin N acyltransferase penDE to yield penicillin in the peroxisomal matrix. The sequence is that of Isopenicillin N synthase from Emericella nidulans (strain FGSC A4 / ATCC 38163 / CBS 112.46 / NRRL 194 / M139) (Aspergillus nidulans).